The primary structure comprises 463 residues: Retinoic acid receptor RXR-gamma (463 aa).

The modulating stretch occupies residues 1–138 (MYGNYSHFMK…TSPGSLVKHI (138 aa)). Residues 18–53 (SPGHTGSTSMSPSAALSTGKPMDSHPSYTDTPVSAP) form a disordered region. Over residues 21 to 33 (HTGSTSMSPSAAL) the composition is skewed to polar residues. NR C4-type zinc fingers lie at residues 139-159 (CAIC…CEGC) and 175-194 (CRDN…CQYC). The nuclear receptor DNA-binding region spans 139–204 (CAICGDRSSG…RYQKCLVMGM (66 aa)). The interval 205-230 (KREAVQEERQRSRERAESEAECASSG) is hinge. Residues 211–222 (EERQRSRERAES) are compositionally biased toward basic and acidic residues. Positions 211–232 (EERQRSRERAESEAECASSGHE) are disordered. Positions 231–459 (HEDMPVERIL…TFLMEMLETP (229 aa)) constitute an NR LBD domain.

Belongs to the nuclear hormone receptor family. NR2 subfamily. Homodimer. Heterodimer with a RAR molecule. Binds DNA preferentially as a RAR/RXR heterodimer. Interacts with RARA. Acetylated by EP300.

Its subcellular location is the nucleus. The protein resides in the cytoplasm. In terms of biological role, receptor for retinoic acid. Retinoic acid receptors bind as heterodimers to their target response elements in response to their ligands, all-trans or 9-cis retinoic acid, and regulate gene expression in various biological processes. The RAR/RXR heterodimers bind to the retinoic acid response elements (RARE) composed of tandem 5'-AGGTCA-3' sites known as DR1-DR5. The high affinity ligand for RXRs is 9-cis retinoic acid. In Pongo abelii (Sumatran orangutan), this protein is Retinoic acid receptor RXR-gamma (RXRG).